Here is a 458-residue protein sequence, read N- to C-terminus: cAMP-dependent protein kinase regulatory subunit (458 aa).

A dimerization and phosphorylation region spans residues 28–222 (QFAANYFNKK…GLESAVGKNF (195 aa)). Phosphoserine is present on serine 184. 3',5'-cyclic AMP contacts are provided by residues 223–338 (LFNK…FLKS), glutamate 288, arginine 297, 341–457 (LLKS…RADK), glutamate 407, and arginine 416.

It belongs to the cAMP-dependent kinase regulatory chain family. Tetramer, composed of 2 regulatory (R) and 2 catalytic (C) subunits. In the presence of cAMP it dissociates into 2 active monomeric C subunits and an R dimer.

The chain is cAMP-dependent protein kinase regulatory subunit (PKAR) from Eremothecium gossypii (strain ATCC 10895 / CBS 109.51 / FGSC 9923 / NRRL Y-1056) (Yeast).